We begin with the raw amino-acid sequence, 481 residues long: Cysteine--tRNA ligase (481 aa).

Zn(2+) is bound at residue Cys-43. Positions 45-55 (ATVQGLPHIGH) match the 'HIGH' region motif. Residues Cys-221, His-246, and Glu-250 each coordinate Zn(2+). The short motif at 277–281 (KMSKS) is the 'KMSKS' region element. Lys-280 is a binding site for ATP.

This sequence belongs to the class-I aminoacyl-tRNA synthetase family. In terms of assembly, monomer. It depends on Zn(2+) as a cofactor.

It is found in the cytoplasm. It catalyses the reaction tRNA(Cys) + L-cysteine + ATP = L-cysteinyl-tRNA(Cys) + AMP + diphosphate. The polypeptide is Cysteine--tRNA ligase (Mycobacterium sp. (strain JLS)).